The sequence spans 485 residues: Myocardial zonula adherens protein (485 aa).

A compositionally biased stretch (low complexity) spans 1 to 18; sequence MMRYGSAATVTTSETASS. 2 disordered regions span residues 1-21 and 40-65; these read MMRY…SQKP and KQEE…KKRN.

Belongs to the MYZAP family.

This chain is Myocardial zonula adherens protein (myzap), found in Xenopus tropicalis (Western clawed frog).